The following is a 122-amino-acid chain: Putative iron-sulfur cluster insertion protein ErpA (122 aa).

Iron-sulfur cluster contacts are provided by cysteine 50, cysteine 114, and cysteine 116.

The protein belongs to the HesB/IscA family. As to quaternary structure, homodimer. Requires iron-sulfur cluster as cofactor.

Required for insertion of 4Fe-4S clusters. In Cupriavidus necator (strain ATCC 17699 / DSM 428 / KCTC 22496 / NCIMB 10442 / H16 / Stanier 337) (Ralstonia eutropha), this protein is Putative iron-sulfur cluster insertion protein ErpA.